The primary structure comprises 555 residues: MAEQTERKLLLSRWGQLRTERESWMSHWKEISDYLLPRAGRFFVQDRNRGEKRHNNILDNTGTRALRVLAAGMMAGMTSPARPWFRLTTSIPELDESAAVKAWLANVTRLMLMIFAKSNTYRALHSMYEELGAFGTASSIVLPDFDAVVYHHSLTAGEYAIAADNQGRVNTLYREFQITVAQMVREFGKDKCSTTVQSLFDRGALEQWVTVIHAIEPRADRDPSKRDDRNMAWKSVYFEPGADETRTLRESGYRSFRALCPRWALVGGDIYGNSPAMEALGDVRQLQHEQLRKAQAIDYKSNPPLQLPVSAKNQDISTVPGGLSYVDAAAPNGGIRTAFEVNLDLSHLLADIVDVRERIKASFYADLFLMLANGTNPQMTATEVAERHEEKLLMLGPVLERMHNEILDPLIELTFQRMVEANILPPPPQEMQGVDLNVEFVSMLAQAQRAIATNSVDRFVGNLGAVAGIKPEVLDKFDADRWADTYADMLGIDPELIVPGNQVALIRKQRADQQQAAQQAALLNQGADTAAKLGSVDTSKQNALTDVTRAFSGYT.

The protein belongs to the podoviridae head-to-tail connector protein family. As to quaternary structure, homododecamer.

Its subcellular location is the virion. Functionally, forms the portal vertex of the capsid. This portal plays critical roles in head assembly, genome packaging, neck/tail attachment, and genome ejection. The portal protein multimerizes as a single ring-shaped homododecamer arranged around a central channel. In Bordetella bronchiseptica (Alcaligenes bronchisepticus), this protein is Probable portal protein.